Here is a 351-residue protein sequence, read N- to C-terminus: D-glucoside 3-dehydrogenase (351 aa).

This sequence belongs to the Gfo/Idh/MocA family.

It catalyses the reaction a D-glucoside + NAD(+) = a 3-dehydro-D-glucoside + NADH + H(+). Functionally, catalyzes the NADH-dependent reduction of the oxo group at C3 of 3-dehydro-D-glucosides leading to D-glucosides. Probably functions in a metabolic pathway that transforms D-gulosides to D-glucosides. Can use 3-dehydro-D-glucose, methyl alpha-3-dehydro-D-glucoside and methyl beta-3-dehydro-D-glucoside as substrates in vitro. However, the actual specific physiological substrates for this metabolic pathway are unknown. To a lesser extent, is also able to catalyze the reverse reactions, i.e. the NAD(+)-dependent oxidation of the hydroxyl group at C3 of D-glucosides leading to 3-dehydro-D-glucosides. Cannot act on UDP-glucose, UDP-N-acetyl-D-glucosamine, D-glucosamine, N-acetyl-D-glucosamine, or UDP-D-galactose. The chain is D-glucoside 3-dehydrogenase (ycjS) from Escherichia coli (strain K12).